A 156-amino-acid polypeptide reads, in one-letter code: MPRRREVEKRKILPDPKFQDRIVAKFVNNLMRKGKKSTGERIIYGAFDQVEAKLKDDPLKVFKKALDNVKPVVEVKSRRVGGATYQVPVEVRQDRRTALAMRWLIDYSRGRGEKTMVEKLAGEIMDAASNRGNAVKKREDTHKMAEANKAFAHYRW.

The protein belongs to the universal ribosomal protein uS7 family. Part of the 30S ribosomal subunit. Contacts proteins S9 and S11.

One of the primary rRNA binding proteins, it binds directly to 16S rRNA where it nucleates assembly of the head domain of the 30S subunit. Is located at the subunit interface close to the decoding center, probably blocks exit of the E-site tRNA. The polypeptide is Small ribosomal subunit protein uS7 (Anaeromyxobacter dehalogenans (strain 2CP-C)).